Reading from the N-terminus, the 67-residue chain is Conotoxin reg3.8 (67 aa).

Positions 1-22 (MMSKLGVLLTICLLLFPLSVLP) are cleaved as a signal peptide. A propeptide spanning residues 23–50 (LDGDQLADQPARHAQSAERNARFHPVKR) is cleaved from the precursor. 3 disulfide bridges follow: cysteine 51/cysteine 65, cysteine 52/cysteine 63, and cysteine 57/cysteine 66. At cysteine 66 the chain carries Cysteine amide.

This sequence belongs to the conotoxin M superfamily. As to expression, expressed by the venom duct.

It localises to the secreted. The chain is Conotoxin reg3.8 from Conus regius (Crown cone).